The sequence spans 107 residues: MRDIMGMMGKVKEMQSKMEKVQQEIAALEIEGRAGGGLVTVILNGKGEMRGLKIDPSLFKEDEVEILEDLIVAAHKDAKEKGEAQAQEKMADLTAGLPLPPGMKLPF.

The tract at residues 81–107 (KGEAQAQEKMADLTAGLPLPPGMKLPF) is disordered. Residues 98-107 (PLPPGMKLPF) show a composition bias toward pro residues.

This sequence belongs to the YbaB/EbfC family. In terms of assembly, homodimer.

Its subcellular location is the cytoplasm. It is found in the nucleoid. Binds to DNA and alters its conformation. May be involved in regulation of gene expression, nucleoid organization and DNA protection. This chain is Nucleoid-associated protein Atu0095, found in Agrobacterium fabrum (strain C58 / ATCC 33970) (Agrobacterium tumefaciens (strain C58)).